A 320-amino-acid polypeptide reads, in one-letter code: Tyrosine recombinase Synpcc7942_B2651 (320 aa).

The Core-binding (CB) domain occupies 16–106; that stretch reads VQDWDVLQML…ALKSLVRFSR (91 aa). Residues 127-313 form the Tyr recombinase domain; it reads RDTTGTTPER…RQDFQGECTE (187 aa). Catalysis depends on residues R167, K193, H264, R267, and H291. Y300 serves as the catalytic O-(3'-phospho-DNA)-tyrosine intermediate.

Belongs to the 'phage' integrase family.

It is found in the cytoplasm. Its function is as follows. Site-specific tyrosine recombinase, which acts by catalyzing the cutting and rejoining of the recombining DNA molecules. This is Tyrosine recombinase Synpcc7942_B2651 from Synechococcus elongatus (strain ATCC 33912 / PCC 7942 / FACHB-805) (Anacystis nidulans R2).